A 191-amino-acid polypeptide reads, in one-letter code: Ribosomal RNA small subunit methyltransferase G (191 aa).

S-adenosyl-L-methionine is bound by residues glycine 62, phenylalanine 67, isoleucine 111–glutamate 112, and arginine 124.

This sequence belongs to the methyltransferase superfamily. RNA methyltransferase RsmG family.

It localises to the cytoplasm. The enzyme catalyses guanosine(527) in 16S rRNA + S-adenosyl-L-methionine = N(7)-methylguanosine(527) in 16S rRNA + S-adenosyl-L-homocysteine. Functionally, specifically methylates the N7 position of guanine in position 527 of 16S rRNA. This Rickettsia typhi (strain ATCC VR-144 / Wilmington) protein is Ribosomal RNA small subunit methyltransferase G.